The chain runs to 174 residues: MKLTLEPAPRCLHEYVSQLLEDWQPECLSCEYSHGGSSPPSLHDLFDLELENSRSPSPLLCDWCAEADSESTISTETDVGFTLNTPPVSPLPSYSTSPASIPEDMLLCLEEMPTFDDGDEVRSATTSFEHWENNFDPNVGSFFGCLRCAYYQEQGENSICGLCYLKALAEGKIF.

An interaction with RB1 in competition with E2F1 region spans residues 40–48 (PSLHDLFDL). The LXCXE motif, interaction with host RB1 signature appears at 106–110 (LLCLE). The segment at 145–163 (CLRCAYYQEQGENSICGLC) is a zinc-finger region.

This sequence belongs to the adenoviridae E1A protein family. As to quaternary structure, interacts with host UBE2I; this interaction interferes with polySUMOylation. Interacts with host RB1; this interaction induces the aberrant dissociation of RB1-E2F1 complex thereby disrupting the activity of RB1 and activating E2F1-regulated genes. Interacts with host ATF7; the interaction enhances ATF7-mediated viral transactivation activity which requires the zinc binding domains of both proteins. Isoform early E1A 32 kDa protein and isoform early E1A 26 kDa protein interact (via N-terminus) with CUL1 and E3 ubiquitin ligase RBX1; these interactions inhibit RBX1-CUL1-dependent elongation reaction of ubiquitin chains and attenuate ubiquitination of SCF(FBXW7) target proteins. Interacts (via PXLXP motif) with host ZMYND11/BS69 (via MYND-type zinc finger); this interaction inhibits E1A mediated transactivation. Interacts with host EP300; this interaction stimulates the acetylation of RB1 by recruiting EP300 and RB1 into a multimeric-protein complex. Interacts with host CTBP1 and CTBP2; this interaction seems to potentiate viral replication. Interacts with host DCAF7. Interacts with host DYRK1A. Interacts with host KPNA4; this interaction allows E1A import into the host nucleus. Interacts with host EP400; this interaction stabilizes MYC. Interacts with host TBP protein; this interaction probably disrupts the TBP-TATA complex.

The protein resides in the host nucleus. In terms of biological role, plays a role in viral genome replication by driving entry of quiescent cells into the cell cycle. Stimulation of progression from G1 to S phase allows the virus to efficiently use the cellular DNA replicating machinery to achieve viral genome replication. E1A protein has both transforming and trans-activating activities. Induces the disassembly of the E2F1 transcription factor from RB1 by direct competition for the same binding site on RB1, with subsequent transcriptional activation of E2F1-regulated S-phase genes and of the E2 region of the adenoviral genome. Release of E2F1 leads to the ARF-mediated inhibition of MDM2 and causes TP53/p53 to accumulate because it is not targeted for degradation by MDM2-mediated ubiquitination anymore. This increase in TP53, in turn, would arrest the cell proliferation and direct its death but this effect is counteracted by the viral protein E1B-55K. Inactivation of the ability of RB1 to arrest the cell cycle is critical for cellular transformation, uncontrolled cellular growth and proliferation induced by viral infection. Interaction with RBX1 and CUL1 inhibits ubiquitination of the proteins targeted by SCF(FBXW7) ubiquitin ligase complex, and may be linked to unregulated host cell proliferation. The tumorigenesis-restraining activity of E1A may be related to the disruption of the host CtBP-CtIP complex through the CtBP binding motif. The chain is Early E1A protein from Canine adenovirus serotype 1 (strain RI261) (CAdV-1).